Here is a 394-residue protein sequence, read N- to C-terminus: Acetate kinase (394 aa).

N7 provides a ligand contact to Mg(2+). K14 is an ATP binding site. Position 88 (R88) interacts with substrate. Catalysis depends on D145, which acts as the Proton donor/acceptor. ATP contacts are provided by residues H205–G209, D279–R281, and G327–N331. Mg(2+) is bound at residue E379.

Belongs to the acetokinase family. Homodimer. Mg(2+) is required as a cofactor. Mn(2+) serves as cofactor.

Its subcellular location is the cytoplasm. It carries out the reaction acetate + ATP = acetyl phosphate + ADP. It functions in the pathway metabolic intermediate biosynthesis; acetyl-CoA biosynthesis; acetyl-CoA from acetate: step 1/2. Catalyzes the formation of acetyl phosphate from acetate and ATP. Can also catalyze the reverse reaction. This Campylobacter lari (strain RM2100 / D67 / ATCC BAA-1060) protein is Acetate kinase.